A 75-amino-acid chain; its full sequence is Putative antitoxin VapB17 (75 aa).

Its function is as follows. Putative antitoxin component of a possible type II toxin-antitoxin (TA) system. The cognate toxin is VapC17. In Mycobacterium tuberculosis (strain CDC 1551 / Oshkosh), this protein is Putative antitoxin VapB17 (vapB17).